Consider the following 205-residue polypeptide: NADH-quinone oxidoreductase subunit I (205 aa).

2 4Fe-4S ferredoxin-type domains span residues 75 to 104 (RLLE…METS) and 114 to 143 (HEYT…HGGR). Cysteine 84, cysteine 87, cysteine 90, cysteine 94, cysteine 123, cysteine 126, cysteine 129, and cysteine 133 together coordinate [4Fe-4S] cluster.

This sequence belongs to the complex I 23 kDa subunit family. NDH-1 is composed of 14 different subunits. Subunits NuoA, H, J, K, L, M, N constitute the membrane sector of the complex. Requires [4Fe-4S] cluster as cofactor.

The protein resides in the cell inner membrane. The enzyme catalyses a quinone + NADH + 5 H(+)(in) = a quinol + NAD(+) + 4 H(+)(out). Its function is as follows. NDH-1 shuttles electrons from NADH, via FMN and iron-sulfur (Fe-S) centers, to quinones in the respiratory chain. The immediate electron acceptor for the enzyme in this species is believed to be ubiquinone. Couples the redox reaction to proton translocation (for every two electrons transferred, four hydrogen ions are translocated across the cytoplasmic membrane), and thus conserves the redox energy in a proton gradient. This Wolinella succinogenes (strain ATCC 29543 / DSM 1740 / CCUG 13145 / JCM 31913 / LMG 7466 / NCTC 11488 / FDC 602W) (Vibrio succinogenes) protein is NADH-quinone oxidoreductase subunit I.